A 305-amino-acid polypeptide reads, in one-letter code: Regulator of microtubule dynamics protein 1 (305 aa).

Lysine 160 bears the N6-succinyllysine mark. TPR repeat units lie at residues 163-199 and 217-253; these read AICI…NPKD and PWYQ…DPNF. Position 245 is an N6-succinyllysine (lysine 245).

The protein belongs to the RMDN family. Interacts with microtubules.

The protein localises to the cytoplasm. It is found in the cytoskeleton. It localises to the spindle. The protein resides in the spindle pole. In Mus musculus (Mouse), this protein is Regulator of microtubule dynamics protein 1 (Rmdn1).